The primary structure comprises 199 residues: Recombination protein RecR (199 aa).

The C4-type zinc finger occupies 58 to 73 (CRICYNITDTEVCNIC). Residues 81-176 (SLICVVSHPM…KVTRIAHGVP (96 aa)) form the Toprim domain.

Belongs to the RecR family.

In terms of biological role, may play a role in DNA repair. It seems to be involved in an RecBC-independent recombinational process of DNA repair. It may act with RecF and RecO. The polypeptide is Recombination protein RecR (Thermoanaerobacter sp. (strain X514)).